Reading from the N-terminus, the 241-residue chain is MGFLPIALPFAELEVGQHLYWQIGNLQLHGQVFLTSWIVIGAILALVVVGTRKMERDPHGVQNLLEFLWDYIRDLARTQIGEKAYRDWMPFIGTLFLFIFVSNWGGSLVPWKLIHLPSGELGAPTADINTTVALALLVSLSYFYAGLSRKGLRYFEYYVHPTPIMIPFKIVEDFTKPLSLSFRLFGNILADELVVAVLVFLVPLFLPVPVMFLGLFTSAIQALIFATLAAYYIGEAVEEHH.

5 consecutive transmembrane segments (helical) span residues 30–50, 91–111, 128–148, 193–213, and 214–234; these read GQVFLTSWIVIGAILALVVVG, FIGTLFLFIFVSNWGGSLVPW, INTTVALALLVSLSYFYAGLS, LVVAVLVFLVPLFLPVPVMFL, and GLFTSAIQALIFATLAAYYIG.

The protein belongs to the ATPase A chain family. F-type ATPases have 2 components, CF(1) - the catalytic core - and CF(0) - the membrane proton channel. CF(1) has five subunits: alpha(3), beta(3), gamma(1), delta(1), epsilon(1). CF(0) has four main subunits: a, b, b' and c.

It is found in the cellular thylakoid membrane. Functionally, key component of the proton channel; it plays a direct role in the translocation of protons across the membrane. The sequence is that of ATP synthase subunit a from Prochlorococcus marinus (strain MIT 9303).